The primary structure comprises 1065 residues: MIREPEFREYNPGQLEEKIEAFWKENNTYEKVKKLRENGPKYYFLDGPPYVSGAIHLGTAWNKIIKDMIIRFRSMQGYNVRRQPGFDMHGLPIEVKVEQALKLKNKREIETKIGVDNFIKKCKEFALNNLKIMTEQFKQLGVWMDWDNPYMTIKNEYIESGWFTLKRAWEKGLLEKDKRVLHWCPRCQTALAEHEVRGEYKMRKDPSIYVKFPIEWKEKEYLLIWTTTPWTLPANLAVAAHPEYEYAKVKVETENGEEYWIMAKALVERVLSEVGVKGEIVETFKGEELEGIRYTHVLLEEYPAQKEFREKYEWAHRVILGEHVTLEDGTGLVHTAPGHGEEDFEVGQRYGLPVYSPVDDAGRYTEGKWKGVYVKDADPEIIEYLKEKGYLVKAGEIEHKYPHCWRCKTPLIFRATDQWFLKVSKVKDQIIKENDEKVTWYPEWVKVRYDNGVMNSGDWVISRQRYWGIPLPIWESEDGEYYVVGSFEELVKLAVAIEVNGERIDLPEGYEEKLKIIEEKLGPEDLHRPYVDAFIIKVNGKEMKRVKDVVDVWFDSGIASWASLDYPRNKELFEKLWPADFIVEGEDQVTKWFYSQQAASVIAFDTVPYRAVAMHGYVLDEKGDKMSKSLGNIIRPEEVVQKEGRDPFRFYMLWATNPWENLRFSWKGLEQVKRMLNILWNVYVLSATYMSLDNFNPTKVNPEELPFREEDRWILSRVNSLIGEVTDGIETFRLTRATRGIYNFVVEDLSRWYIRLIRKRMWVEGDDPDKLAAYYTVWKVFDVLLRLMAPFTPYIAEEIYQNLIRPFVGVESVHMLDWPEADEKAIDEELEKEMEYARKIVEAGSSARQKARIKLRYPVRRIIIETEDETVKKAVERINRILRDQLNAKEVVVGKVERELIIKPNFAKVGPEFKGDAKKVIAWISEHGRELYEKGEMDVEIEGKTFHITREHVTIEEKLPDFFVAEEFDGGRVFVDKTLTRELLAEGLAREFVRRIQEMRKRLDLDVNDRIVVTIETTDENRELLQENLDYIMRETRAVEVRFEEAKGYVVEWPEVQAKIGIEKV.

Residues 49–59 (PYVSGAIHLGT) carry the 'HIGH' region motif. Residues 625 to 629 (KMSKS) carry the 'KMSKS' region motif. K628 lines the ATP pocket.

This sequence belongs to the class-I aminoacyl-tRNA synthetase family. IleS type 2 subfamily. As to quaternary structure, monomer. Zn(2+) is required as a cofactor.

It is found in the cytoplasm. It carries out the reaction tRNA(Ile) + L-isoleucine + ATP = L-isoleucyl-tRNA(Ile) + AMP + diphosphate. Its function is as follows. Catalyzes the attachment of isoleucine to tRNA(Ile). As IleRS can inadvertently accommodate and process structurally similar amino acids such as valine, to avoid such errors it has two additional distinct tRNA(Ile)-dependent editing activities. One activity is designated as 'pretransfer' editing and involves the hydrolysis of activated Val-AMP. The other activity is designated 'posttransfer' editing and involves deacylation of mischarged Val-tRNA(Ile). This chain is Isoleucine--tRNA ligase, found in Thermococcus kodakarensis (strain ATCC BAA-918 / JCM 12380 / KOD1) (Pyrococcus kodakaraensis (strain KOD1)).